A 182-amino-acid chain; its full sequence is ATP synthase subunit b (182 aa).

Residues 25–45 (VVLAGFAVLFYIVVKFVVPMF) form a helical membrane-spanning segment.

This sequence belongs to the ATPase B chain family. F-type ATPases have 2 components, F(1) - the catalytic core - and F(0) - the membrane proton channel. F(1) has five subunits: alpha(3), beta(3), gamma(1), delta(1), epsilon(1). F(0) has three main subunits: a(1), b(2) and c(10-14). The alpha and beta chains form an alternating ring which encloses part of the gamma chain. F(1) is attached to F(0) by a central stalk formed by the gamma and epsilon chains, while a peripheral stalk is formed by the delta and b chains.

It is found in the cell membrane. In terms of biological role, f(1)F(0) ATP synthase produces ATP from ADP in the presence of a proton or sodium gradient. F-type ATPases consist of two structural domains, F(1) containing the extramembraneous catalytic core and F(0) containing the membrane proton channel, linked together by a central stalk and a peripheral stalk. During catalysis, ATP synthesis in the catalytic domain of F(1) is coupled via a rotary mechanism of the central stalk subunits to proton translocation. Its function is as follows. Component of the F(0) channel, it forms part of the peripheral stalk, linking F(1) to F(0). This is ATP synthase subunit b from Arthrobacter sp. (strain FB24).